We begin with the raw amino-acid sequence, 635 residues long: Threonine--tRNA ligase (635 aa).

The region spanning M1 to T58 is the TGS domain. Residues D237 to P528 are catalytic. C328, H379, and H505 together coordinate Zn(2+).

This sequence belongs to the class-II aminoacyl-tRNA synthetase family. In terms of assembly, homodimer. Zn(2+) is required as a cofactor.

It localises to the cytoplasm. The catalysed reaction is tRNA(Thr) + L-threonine + ATP = L-threonyl-tRNA(Thr) + AMP + diphosphate + H(+). Its function is as follows. Catalyzes the attachment of threonine to tRNA(Thr) in a two-step reaction: L-threonine is first activated by ATP to form Thr-AMP and then transferred to the acceptor end of tRNA(Thr). Also edits incorrectly charged L-seryl-tRNA(Thr). This chain is Threonine--tRNA ligase, found in Chlamydia pneumoniae (Chlamydophila pneumoniae).